Here is a 437-residue protein sequence, read N- to C-terminus: tRNA-2-methylthio-N(6)-dimethylallyladenosine synthase (437 aa).

The MTTase N-terminal domain maps to Lys2–Asp117. [4Fe-4S] cluster-binding residues include Cys11, Cys48, Cys80, Cys154, Cys158, and Cys161. The region spanning Arg140–Gln372 is the Radical SAM core domain. A TRAM domain is found at Lys375–Val437.

The protein belongs to the methylthiotransferase family. MiaB subfamily. As to quaternary structure, monomer. It depends on [4Fe-4S] cluster as a cofactor.

It localises to the cytoplasm. It carries out the reaction N(6)-dimethylallyladenosine(37) in tRNA + (sulfur carrier)-SH + AH2 + 2 S-adenosyl-L-methionine = 2-methylsulfanyl-N(6)-dimethylallyladenosine(37) in tRNA + (sulfur carrier)-H + 5'-deoxyadenosine + L-methionine + A + S-adenosyl-L-homocysteine + 2 H(+). Catalyzes the methylthiolation of N6-(dimethylallyl)adenosine (i(6)A), leading to the formation of 2-methylthio-N6-(dimethylallyl)adenosine (ms(2)i(6)A) at position 37 in tRNAs that read codons beginning with uridine. The polypeptide is tRNA-2-methylthio-N(6)-dimethylallyladenosine synthase (Magnetococcus marinus (strain ATCC BAA-1437 / JCM 17883 / MC-1)).